We begin with the raw amino-acid sequence, 133 residues long: Profilin Sal k 4.0301 (133 aa).

Cys95 and Cys117 are oxidised to a cystine.

Belongs to the profilin family. Occurs in many kinds of cells as a complex with monomeric actin in a 1:1 ratio. Expressed in pollen (at protein and mRNA level).

Its subcellular location is the cytoplasm. The protein localises to the cytoskeleton. Binds to actin and affects the structure of the cytoskeleton. At high concentrations, profilin prevents the polymerization of actin, whereas it enhances it at low concentrations. The polypeptide is Profilin Sal k 4.0301 (Kali turgidum (Prickly saltwort)).